The following is a 477-amino-acid chain: RNA pseudouridine synthase 4, mitochondrial (477 aa).

Residues 1-43 (MAKWRLATATLRRQLQSSSPTISTFKNPTKALSAAAHQSTRSY) constitute a mitochondrion transit peptide. The interval 34–55 (AAAHQSTRSYSTTQTDDSRGKW) is disordered. The segment covering 36–48 (AHQSTRSYSTTQT) has biased composition (polar residues). The S4 RNA-binding domain maps to 90-175 (TTALRWILRC…AKKESFQCSD (86 aa)). The active site involves Asp236.

This sequence belongs to the pseudouridine synthase RluA family.

It localises to the mitochondrion. It catalyses the reaction a uridine in RNA = a pseudouridine in RNA. The chain is RNA pseudouridine synthase 4, mitochondrial from Arabidopsis thaliana (Mouse-ear cress).